The following is a 170-amino-acid chain: Small ribosomal subunit protein uS3mB (170 aa).

Residues 1–30 (MAAPVMSAFGRLQGLIRTERSLLTHVQSRC) constitute a mitochondrion transit peptide.

Belongs to the universal ribosomal protein uS3 family. In terms of assembly, component of the mitochondrial ribosome small subunit (28S) which comprises a 12S rRNA and about 30 distinct proteins.

Its subcellular location is the mitochondrion. This is Small ribosomal subunit protein uS3mB (mrps24-b) from Xenopus laevis (African clawed frog).